Here is a 190-residue protein sequence, read N- to C-terminus: Orotate phosphoribosyltransferase (190 aa).

114 to 122 (EDVITTGGS) provides a ligand contact to 5-phospho-alpha-D-ribose 1-diphosphate. Orotate is bound by residues T118 and R146.

It belongs to the purine/pyrimidine phosphoribosyltransferase family. PyrE subfamily. In terms of assembly, homodimer. Mg(2+) is required as a cofactor.

It catalyses the reaction orotidine 5'-phosphate + diphosphate = orotate + 5-phospho-alpha-D-ribose 1-diphosphate. It functions in the pathway pyrimidine metabolism; UMP biosynthesis via de novo pathway; UMP from orotate: step 1/2. In terms of biological role, catalyzes the transfer of a ribosyl phosphate group from 5-phosphoribose 1-diphosphate to orotate, leading to the formation of orotidine monophosphate (OMP). This is Orotate phosphoribosyltransferase from Pelotomaculum thermopropionicum (strain DSM 13744 / JCM 10971 / SI).